The primary structure comprises 367 residues: MTPTETFYEVMRRQGVTRRSFLKFCSLTATALGLGPAYTSEIAHAMETKPRTPVLWLHGLECTCCSESFIRSAHPLVKDVVLSMISLDYDDTLMAAAGHQAEAALADTIERYKGNYILAVEGNPPLNEDGMFCIIGGKPFVDQLRYAAKHAKAIISWGSCASHGCVQAARPNPTRATPVHQVITDKPIIKVPGCPPIAEVMTGVITYMLTFGKLPELDRTGRPKMFYSQRIHDKCYRRPHFDAGQFVESFDDEGARRGYCLYKVGCKGPTTYNACSTIRWNEGTSFPIQAGHGCIGCSEEGFWDKGSWYARLQDIHQFGIEANADQIGGTVAVGAAGAVAAHAAVSALKRAQTKRQTTTTTTPKEHV.

A signal peptide (tat-type signal) is located at residues 1–45; sequence MTPTETFYEVMRRQGVTRRSFLKFCSLTATALGLGPAYTSEIAHA. [4Fe-4S] cluster-binding residues include Cys-62, Cys-65, Cys-160, Cys-194, His-232, Cys-235, Cys-260, and Cys-266. [3Fe-4S] cluster contacts are provided by Cys-275, Cys-294, and Cys-297.

The protein belongs to the [NiFe]/[NiFeSe] hydrogenase small subunit family. Heterodimer of a large and a small subunit. The cofactor is [4Fe-4S] cluster. [3Fe-4S] cluster is required as a cofactor. In terms of processing, predicted to be exported by the Tat system. The position of the signal peptide cleavage has been experimentally proven.

It localises to the cell membrane. It carries out the reaction H2 + A = AH2. In terms of biological role, this enzyme recycles the H(2) produced by nitrogenase to increase the production of ATP and to protect nitrogenase against inhibition or damage by O(2) under carbon- or phosphate-limited conditions. The sequence is that of Uptake hydrogenase small subunit (hoxS) from Afipia carboxidovorans (strain ATCC 49405 / DSM 1227 / KCTC 32145 / OM5) (Oligotropha carboxidovorans).